The sequence spans 476 residues: FAD-dependent monooxygenase prhF (476 aa).

Residues glutamate 41, glycine 55, and arginine 114 each coordinate FAD. Residue tyrosine 222 is part of the active site. Positions 314 and 327 each coordinate FAD. An N-linked (GlcNAc...) asparagine glycan is attached at asparagine 343. A helical transmembrane segment spans residues 447-467 (LGSTPIQMLTLLLPCLFYFMY). A glycan (N-linked (GlcNAc...) asparagine) is linked at asparagine 471.

This sequence belongs to the paxM FAD-dependent monooxygenase family. It depends on FAD as a cofactor.

The protein resides in the membrane. The protein operates within secondary metabolite biosynthesis; terpenoid biosynthesis. FAD-dependent monooxygenase; part of the gene cluster that mediates the biosynthesis of paraherquonin, a meroterpenoid with a unique, highly congested hexacyclic molecular architecture. The first step of the pathway is the synthesis of 3,5-dimethylorsellinic acid (DMOA) by the polyketide synthase prhL. Synthesis of DMOA is followed by farnesylation by the prenyltransferase prhE, methylesterification by the methyl-transferase prhM, epoxidation of the prenyl chain by the flavin-dependent monooxygenase prhF, and cyclization of the farnesyl moiety by the terpene cyclase prhH, to yield the tetracyclic intermediate, protoaustinoid A. The short chain dehydrogenase prhI then oxidizes the C-3 alcohol group of the terpene cyclase product to transform protoaustinoid A into protoaustinoid B. The FAD-binding monooxygenase prhJ catalyzes the oxidation of protoaustinoid B into preaustinoid A which is further oxidized into preaustinoid A1 by FAD-binding monooxygenase phrK. Finally, prhA leads to berkeleydione via the berkeleyone B intermediate. PrhA is a multifunctional dioxygenase that first desaturates at C5-C6 to form berkeleyone B, followed by rearrangement of the A/B-ring to form the cycloheptadiene moiety in berkeleydione. Berkeleydione serves as the key intermediate for the biosynthesis of paraherquonin as well as many other meroterpenoids. The cytochrome P450 monooxygenases prhB, prhD, and prhN, as well as the isomerase prhC, are probably involved in the late stage of paraherquonin biosynthesis, after the production of berkeleydione. Especially prhC might be a multifunctional enzyme that catalyzes the D-ring expansion via intramolecular methoxy rearrangement, as well as the hydrolysis of the expanded D-ring. This Penicillium brasilianum protein is FAD-dependent monooxygenase prhF.